The following is a 208-amino-acid chain: Putative adhesin P1-like protein MPN_468 (208 aa).

2 disordered regions span residues 29–49 and 97–172; these read TNGSPAGNTSSTTQSNDVAPT and DSKT…NLTP. The span at 100 to 132 shows a compositional bias: low complexity; that stretch reads TQNNTTTNENHTKFASATGSGQQQGSTTTTSAG. Residues 145-158 are compositionally biased toward polar residues; it reads SGNSISVQEATSGD. Residues 159–172 are compositionally biased toward low complexity; sequence NLTNYTNLPPNLTP.

It belongs to the adhesin P1 family.

This chain is Putative adhesin P1-like protein MPN_468, found in Mycoplasma pneumoniae (strain ATCC 29342 / M129 / Subtype 1) (Mycoplasmoides pneumoniae).